A 459-amino-acid polypeptide reads, in one-letter code: Bifunctional protein GlmU (459 aa).

The tract at residues 1 to 229 (MTNYAIILAA…FDESLGVNDR (229 aa)) is pyrophosphorylase. UDP-N-acetyl-alpha-D-glucosamine is bound by residues 8–11 (LAAG), Lys-22, Gln-72, and 77–78 (GT). Residue Asp-102 participates in Mg(2+) binding. Positions 139, 154, 169, and 227 each coordinate UDP-N-acetyl-alpha-D-glucosamine. Mg(2+) is bound at residue Asn-227. Residues 230–250 (VALATAESVMRRRINQKHMVN) are linker. The N-acetyltransferase stretch occupies residues 251–459 (GVSFVNPDAT…KRLPHHPQNK (209 aa)). The UDP-N-acetyl-alpha-D-glucosamine site is built by Arg-332 and Lys-350. Residue His-362 is the Proton acceptor of the active site. 2 residues coordinate UDP-N-acetyl-alpha-D-glucosamine: Tyr-365 and Asn-376. Residues Ala-379, 385–386 (NY), Ser-404, Ala-422, and Arg-439 contribute to the acetyl-CoA site.

In the N-terminal section; belongs to the N-acetylglucosamine-1-phosphate uridyltransferase family. This sequence in the C-terminal section; belongs to the transferase hexapeptide repeat family. Homotrimer. Mg(2+) serves as cofactor.

It is found in the cytoplasm. It carries out the reaction alpha-D-glucosamine 1-phosphate + acetyl-CoA = N-acetyl-alpha-D-glucosamine 1-phosphate + CoA + H(+). The catalysed reaction is N-acetyl-alpha-D-glucosamine 1-phosphate + UTP + H(+) = UDP-N-acetyl-alpha-D-glucosamine + diphosphate. Its pathway is nucleotide-sugar biosynthesis; UDP-N-acetyl-alpha-D-glucosamine biosynthesis; N-acetyl-alpha-D-glucosamine 1-phosphate from alpha-D-glucosamine 6-phosphate (route II): step 2/2. The protein operates within nucleotide-sugar biosynthesis; UDP-N-acetyl-alpha-D-glucosamine biosynthesis; UDP-N-acetyl-alpha-D-glucosamine from N-acetyl-alpha-D-glucosamine 1-phosphate: step 1/1. It functions in the pathway bacterial outer membrane biogenesis; LPS lipid A biosynthesis. In terms of biological role, catalyzes the last two sequential reactions in the de novo biosynthetic pathway for UDP-N-acetylglucosamine (UDP-GlcNAc). The C-terminal domain catalyzes the transfer of acetyl group from acetyl coenzyme A to glucosamine-1-phosphate (GlcN-1-P) to produce N-acetylglucosamine-1-phosphate (GlcNAc-1-P), which is converted into UDP-GlcNAc by the transfer of uridine 5-monophosphate (from uridine 5-triphosphate), a reaction catalyzed by the N-terminal domain. This Streptococcus gordonii (strain Challis / ATCC 35105 / BCRC 15272 / CH1 / DL1 / V288) protein is Bifunctional protein GlmU.